A 224-amino-acid polypeptide reads, in one-letter code: PKHD-type hydroxylase CYB_2270 (224 aa).

A Fe2OG dioxygenase domain is found at 78–176 (LIHSILISCY…RYAAVSWVQS (99 aa)). Fe cation is bound by residues His-96, Asp-98, and His-157. Position 167 (Arg-167) interacts with 2-oxoglutarate.

Fe(2+) serves as cofactor. L-ascorbate is required as a cofactor.

The protein is PKHD-type hydroxylase CYB_2270 of Synechococcus sp. (strain JA-2-3B'a(2-13)) (Cyanobacteria bacterium Yellowstone B-Prime).